The primary structure comprises 86 residues: Neuropeptide precursor capa-1 (86 aa).

A signal peptide spans 1-19 (MLLWIVATLLIFSLPVSTA).

As to expression, expressed in two pairs of neurons in the anterior part of the nervous system (at protein level).

Its function is as follows. Encodes at least three neuropeptides: two of the periviscerokinin family (APHPSSALLVPYPRV-amide and LYMARV-amide) and one pyrokinin (AFFYTPRI-amide). In terms of biological role, putative ligand for neuromedin U receptor homolog nmur-2. The protein is Neuropeptide precursor capa-1 of Caenorhabditis elegans.